Consider the following 538-residue polypeptide: MVAYRFLTLISLGLGSHCASALQYGYNQVSTHKDSAVVAGAFPAINGTHLQSPAFTSPGTVPRGFSDGTSGPTRDETMEGFMRRLARSNSWMTYHKANFKSEEGRKFPYMYLSASKSSIEKPSSHKLRVWLQGGVHGNEPAGDQSMLALLGDLAANQKWAAKLLEKMDILVLPRYNPDGVFYFQRYLATNFDPNRDHIKLARQQTRDIKELFARFSPHIATDMHEFTAGRAFGPKKDIIYAADALFSSAKNLNIDEGIRQLSEKLFAKRMGKDIEAAGLRWDPYITQGESSSSKLLLREAGTDAKIGRNAMGLSQCVVFLCETRGIGIADQHFERRTLSGLVMVKSILQTAVDNFDEVYNTIERGIRRFTNSRNDIVLTDRSPIMERTFGMLNTTDATLFDYPIDFATTTPAQAVLTRSRPRAYLIPPSWPDIVKRLEVFGVKADKLPYSYVGPVEALNVTSVTFDKEYYEGVVTTTVETKLVERNIRLPAGSYLVKTNQKNAALAFVALEPENIDSFASFGVIPVSTGDQYPIFRLK.

The N-terminal stretch at 1–21 is a signal peptide; sequence MVAYRFLTLISLGLGSHCASA. Residue asparagine 46 is glycosylated (N-linked (GlcNAc...) asparagine). Positions 53–76 are disordered; that stretch reads PAFTSPGTVPRGFSDGTSGPTRDE. Positions 71–351 constitute a Peptidase M14 domain; that stretch reads GPTRDETMEG…VMVKSILQTA (281 aa). Residues histidine 136, glutamate 139, and histidine 224 each coordinate Zn(2+). The active-site Proton donor/acceptor is the glutamate 322. 2 N-linked (GlcNAc...) asparagine glycosylation sites follow: asparagine 393 and asparagine 459.

Belongs to the peptidase M14 family. It depends on Zn(2+) as a cofactor.

The protein localises to the secreted. In terms of biological role, extracellular metalloprotease that contributes to pathogenicity. This is Carboxypeptidase 2 (MCPB) from Trichophyton equinum (Horse ringworm fungus).